The chain runs to 197 residues: Putative manganese efflux pump MntP 1 (197 aa).

A run of 6 helical transmembrane segments spans residues 8–28, 43–63, 66–86, 123–143, 146–166, and 176–196; these read VILLAIALAMDAFAVSIGLGA, VYAALYFGIAQGVMPLIGYLL, VLLGWLATAAPWLGGGILILL, LAIATSIDAMAAGFTLNLLAL, WLACSIIAIVTAGFGFFGIYL, and DKAEILGGLVLIAIGIKVMFI.

It belongs to the MntP (TC 9.B.29) family.

It is found in the cell inner membrane. In terms of biological role, probably functions as a manganese efflux pump. The chain is Putative manganese efflux pump MntP 1 from Psychrobacter cryohalolentis (strain ATCC BAA-1226 / DSM 17306 / VKM B-2378 / K5).